We begin with the raw amino-acid sequence, 740 residues long: Eukaryotic translation initiation factor 3 subunit B (740 aa).

A compositionally biased stretch (polar residues) spans 1 to 10 (MAPSFDTLSE). The interval 1–20 (MAPSFDTLSEQDLHEEEEEE) is disordered. The region spanning 40–126 (TFVVIDGLPV…HTLLVNKLMD (87 aa)) is the RRM domain. 6 WD repeats span residues 193–230 (AHWT…KQKQ), 232–289 (PHPF…RSFV), 302–343 (EPKK…LLGK), 455–496 (SLKD…SFFA), 513–556 (IEKK…EKPE), and 571–609 (TEHY…HTFA). The tract at residues 696–721 (AYGLPEEADDPKLAKDAAATTQEQGE) is disordered.

This sequence belongs to the eIF-3 subunit B family. As to quaternary structure, component of the eukaryotic translation initiation factor 3 (eIF-3) complex.

The protein localises to the cytoplasm. RNA-binding component of the eukaryotic translation initiation factor 3 (eIF-3) complex, which is involved in protein synthesis of a specialized repertoire of mRNAs and, together with other initiation factors, stimulates binding of mRNA and methionyl-tRNAi to the 40S ribosome. The eIF-3 complex specifically targets and initiates translation of a subset of mRNAs involved in cell proliferation. In Aspergillus fumigatus (strain ATCC MYA-4609 / CBS 101355 / FGSC A1100 / Af293) (Neosartorya fumigata), this protein is Eukaryotic translation initiation factor 3 subunit B (prt1).